We begin with the raw amino-acid sequence, 366 residues long: C-X-C chemokine receptor type 3 (366 aa).

The Extracellular portion of the chain corresponds to 1 to 55; sequence MVPEMSERQEFQASEFAYLLENSSYDYGENETYFCCTSPPCPQDFSLNFDRTFLP. Asn22 carries an N-linked (GlcNAc...) asparagine glycan. Sulfotyrosine occurs at positions 25 and 27. Asn30 carries an N-linked (GlcNAc...) asparagine glycan. The helical transmembrane segment at 56–76 threads the bilayer; sequence VLYSLLFVLGLLGNGVVAVVL. At 77-88 the chain is on the cytoplasmic side; sequence LSQRAALSSTDT. Residues 89 to 109 traverse the membrane as a helical segment; it reads FLLHLAVADALLVLTLPLWAV. Topologically, residues 110–124 are extracellular; that stretch reads DAAIQWVFGSGLCKV. A disulfide bridge links Cys122 with Cys201. The chain crosses the membrane as a helical span at residues 125–145; the sequence is AGALFNINFYAGALLLACISF. Residues 146–167 lie on the Cytoplasmic side of the membrane; it reads DRYLSIVHATQFYRRGPPARVA. A helical membrane pass occupies residues 168 to 188; the sequence is LTCVAVWGLCLLFALPDFIFL. The Extracellular segment spans residues 189-221; sequence SSHHDNRLNATHCQYNFPQEGRTALRVLQLVAG. N-linked (GlcNAc...) asparagine glycosylation is present at Asn197. A helical transmembrane segment spans residues 222–242; that stretch reads FLLPLLVMAYCYARILTVLLV. The Cytoplasmic segment spans residues 243–254; it reads SRGQRRLRAMRL. A helical membrane pass occupies residues 255-275; that stretch reads VVVVVVAFALCWTPYHLVVLV. Topologically, residues 276–299 are extracellular; sequence DTLMDLGALARNCGRESRVDVAKS. Residues 300–320 traverse the membrane as a helical segment; the sequence is VTSGMGYMHCCLNPLLYAFVG. Topologically, residues 321-366 are cytoplasmic; it reads VKFRERMWVLLMRLGCPDQRGHQRQPSASRRDSSWSETTEASYSGL. A disordered region spans residues 339–366; that stretch reads QRGHQRQPSASRRDSSWSETTEASYSGL. Residues 355–366 are compositionally biased toward polar residues; it reads WSETTEASYSGL.

Belongs to the G-protein coupled receptor 1 family. As to quaternary structure, homomer. Forms heteromers with ACKR4. Interacts with PF4/CXCL4. Sulfation on Tyr-25 and Tyr-27 is essential for CXCL10 binding. Post-translationally, N-glycosylated.

The protein resides in the cell membrane. Functionally, receptor for the C-X-C chemokine CXCL9, CXCL10 and CXCL11 and mediates the proliferation, survival and angiogenic activity of mesangial cells through a heterotrimeric G-protein signaling pathway. Probably promotes cell chemotaxis response. Binds to CCL21. Upon activation by PF4, induces activated T-lymphocytes migration mediated via downstream Ras/extracellular signal-regulated kinase (ERK) signaling. The polypeptide is C-X-C chemokine receptor type 3 (CXCR3) (Capra hircus (Goat)).